We begin with the raw amino-acid sequence, 600 residues long: Albumin (600 aa).

Positions 1–10 (LLFLFSSAYS) are cleaved as a signal peptide. A propeptide spanning residues 11–16 (RGVFRR) is cleaved from the precursor. Albumin domains are found at residues 11–202 (RGVF…DELR), 203–395 (DEGK…EFQP), and 396–593 (LVEE…KFVA). H19 is a binding site for Cu cation. S21 carries the phosphoserine modification. The Ca(2+) site is built by E22 and D29. C69 and C78 are joined by a disulfide. Residues S74 and S81 each carry the phosphoserine modification. Position 83 (H83) interacts with Zn(2+). Disulfide bonds link C91–C107, C106–C117, C140–C185, C184–C193, C216–C262, and C261–C269. T99 is subject to Phosphothreonine. An N6-succinyllysine modification is found at K221. K256 lines the (4Z,15Z)-bilirubin IXalpha pocket. E260 is a Ca(2+) binding site. Zn(2+) contacts are provided by H263 and D265. Ca(2+) contacts are provided by D265, E268, D271, and D275. Disulfide bonds link C281-C295, C294-C305, C332-C377, C376-C385, C408-C454, C453-C464, C477-C493, and C492-C503. S289 bears the Phosphoserine mark. Phosphoserine is present on S435. A phosphothreonine mark is found at T436 and T438. K452 is subject to N6-succinyllysine. S505 carries the phosphoserine modification. 2 disulfide bridges follow: C530-C575 and C574-C583. Residue K535 is modified to N6-succinyllysine. Residue K550 is modified to N6-methyllysine. K580 bears the N6-succinyllysine mark.

It belongs to the ALB/AFP/VDB family. Interacts with FCGRT; this interaction regulates ALB homeostasis. Interacts with TASOR. In plasma, occurs in a covalently-linked complex with chromophore-bound alpha-1-microglobulin; this interaction does not prevent fatty acid binding to ALB. Phosphorylated by FAM20C in the extracellular medium. Plasma.

It localises to the secreted. Functionally, binds water, Ca(2+), Na(+), K(+), fatty acids, hormones, bilirubin and drugs. Its main function is the regulation of the colloidal osmotic pressure of blood. Major zinc transporter in plasma, typically binds about 80% of all plasma zinc. Major calcium and magnesium transporter in plasma, binds approximately 45% of circulating calcium and magnesium in plasma. Potentially has more than two calcium-binding sites and might additionally bind calcium in a non-specific manner. The shared binding site between zinc and calcium at residue Asp-265 suggests a crosstalk between zinc and calcium transport in the blood. The rank order of affinity is zinc &gt; calcium &gt; magnesium. Binds to the bacterial siderophore enterobactin and inhibits enterobactin-mediated iron uptake of E.coli from ferric transferrin, and may thereby limit the utilization of iron and growth of enteric bacteria such as E.coli. Does not prevent iron uptake by the bacterial siderophore aerobactin. The polypeptide is Albumin (ALB) (Macaca mulatta (Rhesus macaque)).